The sequence spans 525 residues: Glutathione hydrolase-like YwrD proenzyme (525 aa).

Thr-339 serves as the catalytic Nucleophile.

The protein belongs to the gamma-glutamyltransferase family. In terms of assembly, this enzyme consists of two polypeptide chains, which are synthesized from a single polypeptide. In terms of processing, cleaved by autocatalysis into a large and a small subunit.

The catalysed reaction is an N-terminal (5-L-glutamyl)-[peptide] + an alpha-amino acid = 5-L-glutamyl amino acid + an N-terminal L-alpha-aminoacyl-[peptide]. The enzyme catalyses glutathione + H2O = L-cysteinylglycine + L-glutamate. It carries out the reaction an S-substituted glutathione + H2O = an S-substituted L-cysteinylglycine + L-glutamate. Overexpressed protein with an N-terminal His tag has been reported not to hydrolyze glutathione; it is not clear if the construct is processed to 2 subunits. In Bacillus subtilis (strain 168), this protein is Glutathione hydrolase-like YwrD proenzyme (ywrD).